The following is a 322-amino-acid chain: Adenine deaminase (322 aa).

Residues histidine 11, histidine 13, and histidine 189 each coordinate Zn(2+). Glutamate 192 acts as the Proton donor in catalysis. A Zn(2+)-binding site is contributed by aspartate 270. Residue aspartate 271 coordinates substrate.

It belongs to the metallo-dependent hydrolases superfamily. Adenosine and AMP deaminases family. Adenine deaminase type 2 subfamily. Zn(2+) serves as cofactor.

The enzyme catalyses adenine + H2O + H(+) = hypoxanthine + NH4(+). Its function is as follows. Catalyzes the hydrolytic deamination of adenine to hypoxanthine. Plays an important role in the purine salvage pathway and in nitrogen catabolism. This is Adenine deaminase from Rhizobium etli (strain ATCC 51251 / DSM 11541 / JCM 21823 / NBRC 15573 / CFN 42).